A 260-amino-acid polypeptide reads, in one-letter code: Type III pantothenate kinase (260 aa).

6-13 (DSGNTNIV) contributes to the ATP binding site. Position 108–111 (108–111 (GADR)) interacts with substrate. Asp110 (proton acceptor) is an active-site residue. K(+) is bound at residue Asp130. Residue Thr133 coordinates ATP. Thr185 contributes to the substrate binding site.

It belongs to the type III pantothenate kinase family. In terms of assembly, homodimer. Requires NH4(+) as cofactor. It depends on K(+) as a cofactor.

The protein localises to the cytoplasm. The enzyme catalyses (R)-pantothenate + ATP = (R)-4'-phosphopantothenate + ADP + H(+). Its pathway is cofactor biosynthesis; coenzyme A biosynthesis; CoA from (R)-pantothenate: step 1/5. In terms of biological role, catalyzes the phosphorylation of pantothenate (Pan), the first step in CoA biosynthesis. This chain is Type III pantothenate kinase, found in Paramagnetospirillum magneticum (strain ATCC 700264 / AMB-1) (Magnetospirillum magneticum).